A 583-amino-acid chain; its full sequence is 2-succinyl-5-enolpyruvyl-6-hydroxy-3-cyclohexene-1-carboxylate synthase (583 aa).

The protein belongs to the TPP enzyme family. MenD subfamily. As to quaternary structure, homodimer. The cofactor is Mg(2+). It depends on Mn(2+) as a cofactor. Requires thiamine diphosphate as cofactor.

The catalysed reaction is isochorismate + 2-oxoglutarate + H(+) = 5-enolpyruvoyl-6-hydroxy-2-succinyl-cyclohex-3-ene-1-carboxylate + CO2. Its pathway is quinol/quinone metabolism; 1,4-dihydroxy-2-naphthoate biosynthesis; 1,4-dihydroxy-2-naphthoate from chorismate: step 2/7. It functions in the pathway quinol/quinone metabolism; menaquinone biosynthesis. In terms of biological role, catalyzes the thiamine diphosphate-dependent decarboxylation of 2-oxoglutarate and the subsequent addition of the resulting succinic semialdehyde-thiamine pyrophosphate anion to isochorismate to yield 2-succinyl-5-enolpyruvyl-6-hydroxy-3-cyclohexene-1-carboxylate (SEPHCHC). This is 2-succinyl-5-enolpyruvyl-6-hydroxy-3-cyclohexene-1-carboxylate synthase from Chlorobium chlorochromatii (strain CaD3).